The primary structure comprises 267 residues: Indole-3-glycerol phosphate synthase (267 aa).

It belongs to the TrpC family.

The enzyme catalyses 1-(2-carboxyphenylamino)-1-deoxy-D-ribulose 5-phosphate + H(+) = (1S,2R)-1-C-(indol-3-yl)glycerol 3-phosphate + CO2 + H2O. Its pathway is amino-acid biosynthesis; L-tryptophan biosynthesis; L-tryptophan from chorismate: step 4/5. The polypeptide is Indole-3-glycerol phosphate synthase (Cupriavidus necator (strain ATCC 17699 / DSM 428 / KCTC 22496 / NCIMB 10442 / H16 / Stanier 337) (Ralstonia eutropha)).